A 305-amino-acid polypeptide reads, in one-letter code: Uridylate-specific endoribonuclease D (305 aa).

The N-terminal stretch at M1–G17 is a signal peptide. Residues S33–I305 enclose the EndoU domain. Catalysis depends on residues H182, H197, and K240. N288 carries an N-linked (GlcNAc...) asparagine glycan.

The protein belongs to the ENDOU family. In terms of assembly, monomer. Mn(2+) serves as cofactor.

It localises to the secreted. It catalyses the reaction ribonucleotidyl-uridine-RNA = a 5'-end dephospho-uridine-RNA + a 3'-end 2',3'-cyclophospho-ribonucleotide-RNA. Its function is as follows. Endoribonuclease that cleaves single-stranded RNAs at 5' of uridylates and releases a product with a 2',3'-cyclic phosphate at the 3'-end. This chain is Uridylate-specific endoribonuclease D (endou-d), found in Xenopus laevis (African clawed frog).